Consider the following 220-residue polypeptide: Competence protein ComFC (220 aa).

It belongs to the ComF/GntX family. As to quaternary structure, monomer and dimer in solution. Interacts with ComFA and DprA; ComFA-ComFC form rings about 150 Angstroms in diameter with apparent 6-fold symmetry.

Involved in transformation (genetic competence for DNA uptake). The protein is Competence protein ComFC of Streptococcus pneumoniae (strain ATCC BAA-255 / R6).